Reading from the N-terminus, the 204-residue chain is Thymidylate kinase (204 aa).

11-18 (GLDKSGKT) provides a ligand contact to ATP.

Belongs to the thymidylate kinase family.

The catalysed reaction is dTMP + ATP = dTDP + ADP. It functions in the pathway pyrimidine metabolism; dTTP biosynthesis. The protein is Thymidylate kinase (TMK) of Bos taurus (Bovine).